The primary structure comprises 328 residues: Acyl-CoA wax alcohol acyltransferase 1 (328 aa).

The next 2 membrane-spanning stretches (helical) occupy residues 12-32 (SLML…LQPL) and 34-53 (VYLL…AWLF).

The protein belongs to the diacylglycerol acyltransferase family. In terms of tissue distribution, predominantly expressed in skin, where it is limited to the sebaceous gland. Expressed in more mature, centrally located cells just before their rupture and sebum release. Also expressed in all tissues except spleen. Expressed at higher level in thymus, prostate and testis.

It localises to the endoplasmic reticulum membrane. The catalysed reaction is a long chain fatty alcohol + a fatty acyl-CoA = a wax ester + CoA. The enzyme catalyses 1,2-di-(9Z-octadecenoyl)-sn-glycerol + (9Z)-octadecenoyl-CoA = 1,2,3-tri-(9Z-octadecenoyl)-glycerol + CoA. It carries out the reaction hexadecan-1-ol + (9Z)-octadecenoyl-CoA = hexadecanyl (9Z)-octadecenoate + CoA. It catalyses the reaction decan-1-ol + (9Z)-octadecenoyl-CoA = 1-O-decyl-(9Z)-octadecenoate + CoA. The catalysed reaction is (9Z)-hexadecen-1-ol + (9Z)-octadecenoyl-CoA = 1-O-(9Z)-hexadecenyl (9Z)-octadecenoate + CoA. The enzyme catalyses octadecan-1-ol + (9Z)-octadecenoyl-CoA = 1-O-octadecyl (9Z)-octadecenoate + CoA. It carries out the reaction (9Z)-octadecen-1-ol + (9Z)-octadecenoyl-CoA = 1-O-(9Z)-octadecenyl (9Z)-octadecenoate + CoA. It catalyses the reaction hexadecan-1-ol + hexadecanoyl-CoA = hexadecanyl hexadecanoate + CoA. The catalysed reaction is hexadecan-1-ol + (9Z)-hexadecenoyl-CoA = 1-O-hexadecyl (9Z)-hexadecenoate + CoA. The enzyme catalyses hexadecan-1-ol + octadecanoyl-CoA = hexadecanyl octadecanoate + CoA. It carries out the reaction eicosan-1-ol + (9Z)-octadecenoyl-CoA = 1-O-eicosanyl (9Z)-octadecenoate + CoA. Acyltransferase that catalyzes the formation of ester bonds between fatty alcohols and fatty acyl-CoAs to form wax monoesters. Shows a strong preference for decyl alcohol (C10), with less activity towards C16 and C18 alcohols. Shows a strong preference for saturated acyl-CoAs. This chain is Acyl-CoA wax alcohol acyltransferase 1 (AWAT1), found in Homo sapiens (Human).